Reading from the N-terminus, the 333-residue chain is Ketol-acid reductoisomerase (NADP(+)) (333 aa).

A KARI N-terminal Rossmann domain is found at 2–182 (ANIYYDSDCD…GGGRAGILET (181 aa)). NADP(+) contacts are provided by residues 25 to 28 (YGSQ), K48, S51, S53, and 83 to 86 (DTIQ). The active site involves H108. Residue G134 participates in NADP(+) binding. The region spanning 183–331 (SFREETETDL…KKLRSMMKWL (149 aa)) is the KARI C-terminal knotted domain. Mg(2+) contacts are provided by D191, E195, E227, and E231. Residue S252 coordinates substrate.

It belongs to the ketol-acid reductoisomerase family. The cofactor is Mg(2+).

The enzyme catalyses (2R)-2,3-dihydroxy-3-methylbutanoate + NADP(+) = (2S)-2-acetolactate + NADPH + H(+). It catalyses the reaction (2R,3R)-2,3-dihydroxy-3-methylpentanoate + NADP(+) = (S)-2-ethyl-2-hydroxy-3-oxobutanoate + NADPH + H(+). It participates in amino-acid biosynthesis; L-isoleucine biosynthesis; L-isoleucine from 2-oxobutanoate: step 2/4. The protein operates within amino-acid biosynthesis; L-valine biosynthesis; L-valine from pyruvate: step 2/4. In terms of biological role, involved in the biosynthesis of branched-chain amino acids (BCAA). Catalyzes an alkyl-migration followed by a ketol-acid reduction of (S)-2-acetolactate (S2AL) to yield (R)-2,3-dihydroxy-isovalerate. In the isomerase reaction, S2AL is rearranged via a Mg-dependent methyl migration to produce 3-hydroxy-3-methyl-2-ketobutyrate (HMKB). In the reductase reaction, this 2-ketoacid undergoes a metal-dependent reduction by NADPH to yield (R)-2,3-dihydroxy-isovalerate. In Leptospira interrogans serogroup Icterohaemorrhagiae serovar copenhageni (strain Fiocruz L1-130), this protein is Ketol-acid reductoisomerase (NADP(+)).